A 92-amino-acid polypeptide reads, in one-letter code: Small ribosomal subunit protein bS6 (92 aa).

The protein belongs to the bacterial ribosomal protein bS6 family.

Its function is as follows. Binds together with bS18 to 16S ribosomal RNA. The chain is Small ribosomal subunit protein bS6 from Clostridioides difficile (strain 630) (Peptoclostridium difficile).